The following is a 309-amino-acid chain: UDP-N-acetylenolpyruvoylglucosamine reductase (309 aa).

The 165-residue stretch at 40-204 folds into the FAD-binding PCMH-type domain; the sequence is LGGKVPLFAI…LQATFKLKKG (165 aa). Arg182 is an active-site residue. Ser233 (proton donor) is an active-site residue. Residue Glu304 is part of the active site.

It belongs to the MurB family. It depends on FAD as a cofactor.

It is found in the cytoplasm. It carries out the reaction UDP-N-acetyl-alpha-D-muramate + NADP(+) = UDP-N-acetyl-3-O-(1-carboxyvinyl)-alpha-D-glucosamine + NADPH + H(+). The protein operates within cell wall biogenesis; peptidoglycan biosynthesis. Cell wall formation. This is UDP-N-acetylenolpyruvoylglucosamine reductase from Fervidobacterium nodosum (strain ATCC 35602 / DSM 5306 / Rt17-B1).